The sequence spans 597 residues: ATP-dependent lipid A-core flippase (597 aa).

Helical transmembrane passes span 26 to 46, 76 to 96, 138 to 158, 164 to 184, 263 to 283, and 292 to 312; these read LWPYIKPLIWVLIGAIVAMAV, WFVPAAVIGLALIRSLSQYAS, AIVFEVNQILNVLLSVLVTLV, VVFLLGYLFYLNWRLTLIVAV, QPLTQFLASIALAVVITIAVV, and VGGFVAFVTSMLLIISPLKHL. Positions 38–321 constitute an ABC transmembrane type-1 domain; that stretch reads IGAIVAMAVS…LMDVNQPLQR (284 aa). The ABC transporter domain maps to 353 to 590; it reads VEFRDVSFVY…DGLYAHLHRI (238 aa). Residue 390 to 397 participates in ATP binding; sequence GPSGSGKT.

Belongs to the ABC transporter superfamily. Lipid exporter (TC 3.A.1.106) family. Homodimer.

It is found in the cell inner membrane. The enzyme catalyses ATP + H2O + lipid A-core oligosaccharideSide 1 = ADP + phosphate + lipid A-core oligosaccharideSide 2.. In terms of biological role, involved in lipopolysaccharide (LPS) biosynthesis. Translocates lipid A-core from the inner to the outer leaflet of the inner membrane. Transmembrane domains (TMD) form a pore in the inner membrane and the ATP-binding domain (NBD) is responsible for energy generation. The sequence is that of ATP-dependent lipid A-core flippase from Paraburkholderia xenovorans (strain LB400).